A 91-amino-acid polypeptide reads, in one-letter code: Small ribosomal subunit protein bS16 (91 aa).

It belongs to the bacterial ribosomal protein bS16 family.

In Staphylococcus haemolyticus (strain JCSC1435), this protein is Small ribosomal subunit protein bS16.